We begin with the raw amino-acid sequence, 143 residues long: Large ribosomal subunit protein uL13 (143 aa).

This sequence belongs to the universal ribosomal protein uL13 family. Part of the 50S ribosomal subunit.

Functionally, this protein is one of the early assembly proteins of the 50S ribosomal subunit, although it is not seen to bind rRNA by itself. It is important during the early stages of 50S assembly. The protein is Large ribosomal subunit protein uL13 of Caldanaerobacter subterraneus subsp. tengcongensis (strain DSM 15242 / JCM 11007 / NBRC 100824 / MB4) (Thermoanaerobacter tengcongensis).